The sequence spans 686 residues: Disintegrin and metalloproteinase domain-containing protein 17 homolog (686 aa).

Positions 1–21 (MKIQDRSLLIFLVLGILKSDA) are cleaved as a signal peptide. The propeptide occupies 22–177 (FNTRVKRHAP…RRAIAIPSDR (156 aa)). N-linked (GlcNAc...) asparagine glycosylation is found at Asn59, Asn206, and Asn262. At 178-637 (RKDVLNVKRN…TGGVLEFIKT (460 aa)) the chain is on the extracellular side. In terms of domain architecture, Peptidase M12B spans 187–445 (NRCTLKLVAD…KWESCFQEEM (259 aa)). 2 disulfides stabilise this stretch: Cys328–Cys440 and Cys394–Cys424. His370 contacts Zn(2+). Glu371 is a catalytic residue. Residues His374 and His380 each contribute to the Zn(2+) site. One can recognise a Disintegrin domain in the interval 446-535 (TSFCGNGIVE…ECPSAPPVRD (90 aa)). The N-linked (GlcNAc...) asparagine glycan is linked to Asn501. Cys506 and Cys527 are disulfide-bonded. Asn581 carries N-linked (GlcNAc...) asparagine glycosylation. A helical transmembrane segment spans residues 638-658 (HIVVIAIIFFTLIFVGIYKIV). The Cytoplasmic segment spans residues 659 to 686 (KYGENFTEKVTHKTAGGCRSVFVKADVN).

Zn(2+) serves as cofactor.

The protein localises to the cell membrane. Functionally, metalloprotease. Acts together with protease sup-17 to facilitate lin-12/Notch signaling during developmental cell fate decision, including anchor cell/ventral uterine precursor cell decision. By modulating glp-1/Notch signaling, plays a role in germline development. This is Disintegrin and metalloproteinase domain-containing protein 17 homolog from Caenorhabditis elegans.